Reading from the N-terminus, the 431-residue chain is Enolase (431 aa).

Residues 27–47 (LESGHSGRAAVPSGASTGSRE) form a disordered region. Glutamine 163 serves as a coordination point for (2R)-2-phosphoglycerate. Glutamate 205 (proton donor) is an active-site residue. Residues aspartate 242, glutamate 285, and aspartate 312 each contribute to the Mg(2+) site. (2R)-2-phosphoglycerate is bound by residues lysine 337, arginine 366, serine 367, and lysine 388. Lysine 337 serves as the catalytic Proton acceptor.

The protein belongs to the enolase family. Requires Mg(2+) as cofactor.

Its subcellular location is the cytoplasm. The protein resides in the secreted. It is found in the cell surface. The enzyme catalyses (2R)-2-phosphoglycerate = phosphoenolpyruvate + H2O. The protein operates within carbohydrate degradation; glycolysis; pyruvate from D-glyceraldehyde 3-phosphate: step 4/5. Catalyzes the reversible conversion of 2-phosphoglycerate (2-PG) into phosphoenolpyruvate (PEP). It is essential for the degradation of carbohydrates via glycolysis. This Oleidesulfovibrio alaskensis (strain ATCC BAA-1058 / DSM 17464 / G20) (Desulfovibrio alaskensis) protein is Enolase.